The primary structure comprises 585 residues: ADP-ribosylation factor-binding protein GGA2 (585 aa).

A VHS domain is found at 33–169; the sequence is ACRMSLAEPD…LLKYKGYAFP (137 aa). Residues K180 and K287 each participate in a glycyl lysine isopeptide (Lys-Gly) (interchain with G-Cter in ubiquitin) cross-link. The GAT domain maps to 196 to 321; sequence EIAQAAKLEE…LLEKFNLLKN (126 aa). The disordered stretch occupies residues 358–378; it reads LDEAPSQGNNNTNGTGTPAAA. Over residues 365–374 the composition is skewed to low complexity; sequence GNNNTNGTGT. The 116-residue stretch at 466 to 581 folds into the GAE domain; that stretch reads TTTAPARTLV…TQAEETAVFT (116 aa).

In terms of assembly, binds to ARF1 and ARF2.

The protein localises to the golgi apparatus. Its subcellular location is the trans-Golgi network. In terms of biological role, may play a role in the regulation of membrane traffic through the trans-Golgi network. This Saccharomyces cerevisiae (strain ATCC 204508 / S288c) (Baker's yeast) protein is ADP-ribosylation factor-binding protein GGA2 (GGA2).